The primary structure comprises 154 residues: Protein X (154 aa).

The tract at residues 26–45 (RGRPVSGPLGSLSSSSPSAV) is disordered. Positions 31–43 (SGPLGSLSSSSPS) are enriched in low complexity. The tract at residues 68–117 (PCALRFTSARRMETTVNAHQILPKILHKRTLGLSTMSTTDLEAYFKDCLF) is mitochondrial targeting sequence.

The protein belongs to the orthohepadnavirus protein X family. May form homodimer. May interact with host CEBPA, CFLAR, CREB1, DDB1, E4F1, HBXIP, HSPD1/HSP60, NFKBIA, POLR2E and SMAD4. Interacts with host SMC5-SMC6 complex and induces its degradation. Interacts with host TRPC4AP; leading to prevent ubiquitination of TRPC4AP. Interacts with host PLSCR1; this interaction promotes ubiquitination and degradation of HBx and impairs HBx-mediated cell proliferation. Post-translationally, a fraction may be phosphorylated in insect cells and HepG2 cells, a human hepatoblastoma cell line. Phosphorylated in vitro by host protein kinase C or mitogen-activated protein kinase. N-acetylated in insect cells.

The protein resides in the host cytoplasm. It localises to the host nucleus. It is found in the host mitochondrion. Multifunctional protein that plays a role in silencing host antiviral defenses and promoting viral transcription. Does not seem to be essential for HBV infection. May be directly involved in development of cirrhosis and liver cancer (hepatocellular carcinoma). Most of cytosolic activities involve modulation of cytosolic calcium. The effect on apoptosis is controversial depending on the cell types in which the studies have been conducted. May induce apoptosis by localizing in mitochondria and causing loss of mitochondrial membrane potential. May also modulate apoptosis by binding host CFLAR, a key regulator of the death-inducing signaling complex (DISC). Promotes viral transcription by using the host E3 ubiquitin ligase DDB1 to target the SMC5-SMC6 complex to proteasomal degradation. This host complex would otherwise bind to viral episomal DNA, and prevents its transcription. Moderately stimulates transcription of many different viral and cellular transcription elements. Promoters and enhancers stimulated by HBx contain DNA binding sites for NF-kappa-B, AP-1, AP-2, c-EBP, ATF/CREB, or the calcium-activated factor NF-AT. The chain is Protein X from Hepatitis B virus genotype D subtype ayw (isolate Japan/JYW796/1988) (HBV-D).